The sequence spans 310 residues: Isoflavone reductase homolog A622 (310 aa).

NADP(+) contacts are provided by residues 13 to 19, arginine 38, and lysine 47; that span reads GGTGYIG. Residue lysine 135 is the Proton acceptor of the active site. Arginine 139 is an NADP(+) binding site.

It belongs to the NmrA-type oxidoreductase family. Isoflavone reductase subfamily. In terms of assembly, monomer. Expressed in roots and stems.

Its subcellular location is the cytoplasm. It participates in alkaloid biosynthesis; nicotine biosynthesis. NADPH-binding protein. Involved in the biosynthesis of pyridine alkaloid natural products, leading mainly to the production of anabasine, anatabine, nicotine and nornicotine, effective deterrents against herbivores with antiparasitic and pesticide properties (neurotoxins); nornicotine serves as the precursor in the synthesis of the carcinogen compound N'-nitrosonornicotine (NNN). Reductase involved in a late step of tobacco alkaloid biosynthesis. Triggers either the formation of a nicotinic acid-derived precursor or the final condensation reaction of tobacco alkaloids. This Nicotiana sylvestris (Wood tobacco) protein is Isoflavone reductase homolog A622.